The following is a 257-amino-acid chain: Paired box protein 1 homolog (257 aa).

Over residues 26 to 37 (TTPSSTSTTPSS) the composition is skewed to low complexity. Residues 26–58 (TTPSSTSTTPSSDNGIQQYSSISTSSGYAPANS) form a disordered region. The segment covering 38-52 (DNGIQQYSSISTSSG) has biased composition (polar residues). Residues 61–187 (KTAEVNQLGG…SSISRILRNK (127 aa)) constitute a DNA-binding region (paired). A PAI subdomain region spans residues 64 to 120 (EVNQLGGVFVNGRPLPFEMRCKIVELSRQGTRPCDISRQLKISHGCVSKILTRFSEN). Residues 139–187 (KVVEYIRSLKRSDPGIFAWEIRDRLISADICDRANLPSVSSISRILRNK) form an RED subdomain region.

The protein localises to the nucleus. Transcription factor. May play a role in pharyngeal cell differentiation. May have a protective role in response to infection by the Gram-negative bacterium Vibrio cholerae. This is Paired box protein 1 homolog from Caenorhabditis elegans.